A 316-amino-acid chain; its full sequence is MSNKLAQLRKLTTVVADTGEIDAIKKYQPEDATTNPSLILKAAQIAEYAPLIDQAIAYAKTQSNDKAQQVQDTCDMLAVNIGKEILKTIPGRISTEVDARLSYDTERSVAKARQLVKMYNDAGISNDRILIKLASTWEGIRAAEILEKEGINCNLTLLFSFAQARACAEAGVFLISPFVGRIMDWYKAKEGRDFAASEDPGVLSVTKIYNYYKEHGYKTVVMGASFRNIGEILELAGCDRLTIAPSLLAELEAAEGELVAKLVDSKGSKARPAPMTHSEFLWEHNLDAMAVEKLAEGIRNFAVDQGKLEAMIAAKL.

Lys-132 serves as the catalytic Schiff-base intermediate with substrate.

Belongs to the transaldolase family. Type 1 subfamily.

Its subcellular location is the cytoplasm. It carries out the reaction D-sedoheptulose 7-phosphate + D-glyceraldehyde 3-phosphate = D-erythrose 4-phosphate + beta-D-fructose 6-phosphate. The protein operates within carbohydrate degradation; pentose phosphate pathway; D-glyceraldehyde 3-phosphate and beta-D-fructose 6-phosphate from D-ribose 5-phosphate and D-xylulose 5-phosphate (non-oxidative stage): step 2/3. In terms of biological role, transaldolase is important for the balance of metabolites in the pentose-phosphate pathway. The chain is Transaldolase from Vibrio cholerae serotype O1 (strain ATCC 39315 / El Tor Inaba N16961).